The sequence spans 319 residues: Malate dehydrogenase (319 aa).

NAD(+) contacts are provided by residues 10–15 (GAGNIG) and Asp34. Positions 83 and 89 each coordinate substrate. NAD(+)-binding positions include Asn96 and 119–121 (ITN). Substrate-binding residues include Asn121 and Arg152. Residue His176 is the Proton acceptor of the active site.

The protein belongs to the LDH/MDH superfamily. MDH type 3 family.

The catalysed reaction is (S)-malate + NAD(+) = oxaloacetate + NADH + H(+). Catalyzes the reversible oxidation of malate to oxaloacetate. The chain is Malate dehydrogenase from Francisella philomiragia subsp. philomiragia (strain ATCC 25017 / CCUG 19701 / FSC 153 / O#319-036).